Here is a 73-residue protein sequence, read N- to C-terminus: Large ribosomal subunit protein bL31 (73 aa).

The protein belongs to the bacterial ribosomal protein bL31 family. Type A subfamily. Part of the 50S ribosomal subunit.

In terms of biological role, binds the 23S rRNA. This Agrobacterium fabrum (strain C58 / ATCC 33970) (Agrobacterium tumefaciens (strain C58)) protein is Large ribosomal subunit protein bL31.